We begin with the raw amino-acid sequence, 312 residues long: tRNA pseudouridine synthase B (312 aa).

The Nucleophile role is filled by D48.

Belongs to the pseudouridine synthase TruB family. Type 1 subfamily.

It carries out the reaction uridine(55) in tRNA = pseudouridine(55) in tRNA. Responsible for synthesis of pseudouridine from uracil-55 in the psi GC loop of transfer RNAs. In Haemophilus influenzae (strain ATCC 51907 / DSM 11121 / KW20 / Rd), this protein is tRNA pseudouridine synthase B.